The chain runs to 264 residues: Neuferricin (264 aa).

The signal sequence occupies residues Met1–Ala22. The region spanning Phe35–Thr134 is the Cytochrome b5 heme-binding domain.

This sequence belongs to the cytochrome b5 family. MAPR subfamily.

The protein resides in the secreted. Heme-binding protein which promotes neuronal but not astrocyte differentiation. In Homo sapiens (Human), this protein is Neuferricin.